The sequence spans 149 residues: Large ribosomal subunit protein uL13 (149 aa).

Belongs to the universal ribosomal protein uL13 family. In terms of assembly, part of the 50S ribosomal subunit.

Functionally, this protein is one of the early assembly proteins of the 50S ribosomal subunit, although it is not seen to bind rRNA by itself. It is important during the early stages of 50S assembly. This chain is Large ribosomal subunit protein uL13, found in Prosthecochloris aestuarii (strain DSM 271 / SK 413).